Consider the following 464-residue polypeptide: 3-isopropylmalate dehydratase large subunit (464 aa).

Residues C345, C405, and C408 each coordinate [4Fe-4S] cluster.

This sequence belongs to the aconitase/IPM isomerase family. LeuC type 1 subfamily. As to quaternary structure, heterodimer of LeuC and LeuD. [4Fe-4S] cluster serves as cofactor.

It carries out the reaction (2R,3S)-3-isopropylmalate = (2S)-2-isopropylmalate. It participates in amino-acid biosynthesis; L-leucine biosynthesis; L-leucine from 3-methyl-2-oxobutanoate: step 2/4. Functionally, catalyzes the isomerization between 2-isopropylmalate and 3-isopropylmalate, via the formation of 2-isopropylmaleate. In Flavobacterium johnsoniae (strain ATCC 17061 / DSM 2064 / JCM 8514 / BCRC 14874 / CCUG 350202 / NBRC 14942 / NCIMB 11054 / UW101) (Cytophaga johnsonae), this protein is 3-isopropylmalate dehydratase large subunit.